The chain runs to 1021 residues: Translation initiation factor IF-2 (1021 aa).

The segment at 50–422 (AFPAEGGSAS…RMGAMVPRGN (373 aa)) is disordered. Positions 57-71 (SASGGRPGGRPGPGN) are enriched in gly residues. Pro residues predominate over residues 75 to 95 (PAPPRPGLAPRPGPRPVPGRP). Over residues 96–112 (GPAARPGGPAAPSAPAA) the composition is skewed to low complexity. Positions 113–129 (PSAPAPGAPAASPPASQ) are enriched in pro residues. Composition is skewed to low complexity over residues 130–159 (PRPI…ASGP), 167–178 (GGPAAPGRARPG), and 187–196 (SAPSAPSAGG). Residues 198–208 (RPGPRPGPRPS) show a composition bias toward pro residues. The segment covering 219-233 (SAGPRQSAGQSGSGP) has biased composition (low complexity). Composition is skewed to pro residues over residues 234 to 254 (ASPP…PRPG) and 262 to 273 (RPSPGSMPPRPG). Composition is skewed to gly residues over residues 275–291 (RPGG…GSGG) and 306–389 (GAPG…GGRG). A compositionally biased stretch (basic residues) spans 390–401 (RPGRQRKSKRAK). The tr-type G domain maps to 514–686 (IRPPVVTVMG…IILTADASLD (173 aa)). The segment at 523 to 530 (GHVDHGKT) is G1. A GTP-binding site is contributed by 523–530 (GHVDHGKT). Residues 548 to 552 (GITQH) are G2. A G3 region spans residues 573–576 (DTPG). Residues 573–577 (DTPGH) and 627–630 (NKVD) contribute to the GTP site. The G4 stretch occupies residues 627–630 (NKVD). Residues 663–665 (SAR) are G5.

This sequence belongs to the TRAFAC class translation factor GTPase superfamily. Classic translation factor GTPase family. IF-2 subfamily.

Its subcellular location is the cytoplasm. In terms of biological role, one of the essential components for the initiation of protein synthesis. Protects formylmethionyl-tRNA from spontaneous hydrolysis and promotes its binding to the 30S ribosomal subunits. Also involved in the hydrolysis of GTP during the formation of the 70S ribosomal complex. In Frankia alni (strain DSM 45986 / CECT 9034 / ACN14a), this protein is Translation initiation factor IF-2.